Reading from the N-terminus, the 489-residue chain is Ribonuclease G (489 aa).

The S1 motif domain occupies 39–128; it reads GNIYKGRVSR…LTTDITLPSR (90 aa). Residues aspartate 304 and aspartate 347 each coordinate Mg(2+).

Belongs to the RNase E/G family. RNase G subfamily. In terms of assembly, homodimer, and possible higher multimers. The cofactor is Mg(2+).

Its subcellular location is the cytoplasm. Its function is as follows. Acts in the processing of the 5'-end of precursors of 16S rRNA. Confers adaptive resistance to aminoglycoside antibiotics through modulation of 16S rRNA processing. An endoribonuclease, it prefers 5'-monophosphorylated substrates and cleaves single-stranded sites rich in A and U residues; also contributes to 23S rRNA processing, tRNA processing and mRNA turnover. Involved in decay of speF mRNA, has a preference for adenine nucleotides. This is Ribonuclease G from Salmonella typhimurium (strain SL1344).